The chain runs to 240 residues: MVQHLSAQEIIQYISDAKKSTPLKVYVNGHFENVTFPESFKVFGSEHSKVIFCEADEWKQFYQKNHSLITELEIEMDRRNSAIPLKDLTNTNARIEPGAFIREQAIIEDGAVVMMGATINIGAIVGEGTMIDMNATLGGRATTGKNVHVGAGAVLAGVIEPPSASPVVIEDNVLIGANAVILEGVRVGAGAIVAAGAIVTQDVPAGAVVAGTPAKVIKQTSEVQDSKREIVSALRKLNNE.

This sequence belongs to the transferase hexapeptide repeat family. DapH subfamily.

It carries out the reaction (S)-2,3,4,5-tetrahydrodipicolinate + acetyl-CoA + H2O = L-2-acetamido-6-oxoheptanedioate + CoA. The protein operates within amino-acid biosynthesis; L-lysine biosynthesis via DAP pathway; LL-2,6-diaminopimelate from (S)-tetrahydrodipicolinate (acetylase route): step 1/3. In terms of biological role, catalyzes the transfer of an acetyl group from acetyl-CoA to tetrahydrodipicolinate. This Staphylococcus epidermidis (strain ATCC 35984 / DSM 28319 / BCRC 17069 / CCUG 31568 / BM 3577 / RP62A) protein is 2,3,4,5-tetrahydropyridine-2,6-dicarboxylate N-acetyltransferase.